Here is a 352-residue protein sequence, read N- to C-terminus: Glycerol-1-phosphate dehydrogenase [NAD(P)+] (352 aa).

NAD(+) is bound by residues 98 to 102 (GKAID) and 120 to 123 (TAAS). D125 provides a ligand contact to substrate. S129 serves as a coordination point for NAD(+). D172 provides a ligand contact to substrate. 2 residues coordinate Zn(2+): D172 and H252. Position 256 (H256) interacts with substrate. H268 is a Zn(2+) binding site.

It belongs to the glycerol-1-phosphate dehydrogenase family. Requires Zn(2+) as cofactor.

Its subcellular location is the cytoplasm. The catalysed reaction is sn-glycerol 1-phosphate + NAD(+) = dihydroxyacetone phosphate + NADH + H(+). It carries out the reaction sn-glycerol 1-phosphate + NADP(+) = dihydroxyacetone phosphate + NADPH + H(+). Its pathway is membrane lipid metabolism; glycerophospholipid metabolism. Its function is as follows. Catalyzes the NAD(P)H-dependent reduction of dihydroxyacetonephosphate (DHAP or glycerone phosphate) to glycerol 1-phosphate (G1P). The G1P thus generated is used as the glycerophosphate backbone of phospholipids in the cellular membranes of Archaea. The sequence is that of Glycerol-1-phosphate dehydrogenase [NAD(P)+] from Halobacterium salinarum (strain ATCC 29341 / DSM 671 / R1).